The following is a 1148-amino-acid chain: Replication factor C subunit 1 (1148 aa).

Residues 46 to 56 (NSSRKEDDFKQ) show a composition bias toward basic and acidic residues. Disordered stretches follow at residues 46–201 (NSSR…LNDE) and 228–380 (TLAM…TNYQ). Lys50 is covalently cross-linked (Glycyl lysine isopeptide (Lys-Gly) (interchain with G-Cter in SUMO2)). Tyr67 is subject to Phosphotyrosine. Phosphoserine occurs at positions 69, 71, 73, and 108. Position 110 is a phosphothreonine (Thr110). Over residues 130 to 141 (RSTNSHLGTSNM) the composition is skewed to polar residues. Ser156 carries the phosphoserine modification. A phosphothreonine mark is found at Thr161 and Thr163. Ser164, Ser173, and Ser190 each carry phosphoserine. The span at 234 to 246 (EEPKTKKARKDTE) shows a compositional bias: basic and acidic residues. A Phosphoserine modification is found at Ser253. A compositionally biased stretch (basic residues) spans 262–271 (EKHKYPHKVK). Phosphoserine occurs at positions 281 and 283. The span at 288-308 (SKYESSKESQQHSKSSADKIG) shows a compositional bias: basic and acidic residues. Phosphoserine is present on Ser312. Basic and acidic residues-rich tracts occupy residues 323–353 (KRKE…ETKT) and 362–376 (AKKE…EKKR). A Phosphoserine modification is found at Ser368. The BRCT domain maps to 402 to 492 (GAENCLEGLI…PGKKSKYEIA (91 aa)). Composition is skewed to basic and acidic residues over residues 496–507 (EMKKESKLERTP) and 520–538 (SKKE…RDSL). The disordered stretch occupies residues 496-538 (EMKKESKLERTPQKNVQGKRKISPSKKESESKKSRPTSKRDSL). At Ser537 the chain carries Phosphoserine. ATP is bound at residue 650–657 (SGPPGVGK). Positions 1081–1148 (KASRHSTSPS…RKGKGKSSKK (68 aa)) are disordered. A compositionally biased stretch (acidic residues) spans 1094–1105 (EYNEELNEDDSQ). A phosphoserine mark is found at Ser1104 and Ser1106. The Nuclear localization signal motif lies at 1120–1124 (IKKKT). Residues 1130-1140 (SKPEKDKEPRK) show a composition bias toward basic and acidic residues.

This sequence belongs to the activator 1 large subunit family. In terms of assembly, large subunit of the RFC complex, an heteropentameric complex consisting of RFC1 and four small subunits RFC2, RFC3, RFC4 and RFC5; the RFC complex interacts with PCNA and the interaction involves RFC1. As to expression, wide tissue distribution. Undetectable in placental tissue.

Its subcellular location is the nucleus. In terms of biological role, subunit of the replication factor C (RFC) complex which acts during elongation of primed DNA templates by DNA polymerases delta and epsilon, and is necessary for ATP-dependent loading of proliferating cell nuclear antigen (PCNA) onto primed DNA. This subunit binds to the primer-template junction. Binds the PO-B transcription element as well as other GA rich DNA sequences. Can bind single- or double-stranded DNA. The polypeptide is Replication factor C subunit 1 (RFC1) (Homo sapiens (Human)).